Consider the following 505-residue polypeptide: ATP synthase subunit beta (505 aa).

157–164 (GGAGVGKT) is an ATP binding site.

It belongs to the ATPase alpha/beta chains family. In terms of assembly, F-type ATPases have 2 components, CF(1) - the catalytic core - and CF(0) - the membrane proton channel. CF(1) has five subunits: alpha(3), beta(3), gamma(1), delta(1), epsilon(1). CF(0) has three main subunits: a(1), b(2) and c(9-12). The alpha and beta chains form an alternating ring which encloses part of the gamma chain. CF(1) is attached to CF(0) by a central stalk formed by the gamma and epsilon chains, while a peripheral stalk is formed by the delta and b chains.

Its subcellular location is the cell inner membrane. The enzyme catalyses ATP + H2O + 4 H(+)(in) = ADP + phosphate + 5 H(+)(out). In terms of biological role, produces ATP from ADP in the presence of a proton gradient across the membrane. The catalytic sites are hosted primarily by the beta subunits. In Bacteroides fragilis (strain ATCC 25285 / DSM 2151 / CCUG 4856 / JCM 11019 / LMG 10263 / NCTC 9343 / Onslow / VPI 2553 / EN-2), this protein is ATP synthase subunit beta.